Consider the following 633-residue polypeptide: GTPase-activating protein GYP3 (633 aa).

Residues 26-127 (AFTVKSPSVP…HSDDLDLVPD (102 aa)) form a disordered region. Positions 37–47 (FHDKMHSDHSS) are enriched in basic and acidic residues. The segment covering 99–115 (GEDDDDNNGDNGNEDLE) has biased composition (acidic residues). A Phosphoserine modification is found at S147. The region spanning 223–456 (GIPAEWRGNA…RIWDCLFYEE (234 aa)) is the Rab-GAP TBC domain. Position 484 is a phosphoserine (S484).

It localises to the cytoplasm. The protein resides in the bud. The protein localises to the bud neck. Its function is as follows. Regulates exocytosis by functioning as a GAP for SEC4. Stimulates specifically the GTPase activity of YPT6. Also required for efficient polarization of the actin patches. The chain is GTPase-activating protein GYP3 (MSB3) from Saccharomyces cerevisiae (strain ATCC 204508 / S288c) (Baker's yeast).